A 130-amino-acid chain; its full sequence is Small ribosomal subunit protein uS9 (130 aa).

It belongs to the universal ribosomal protein uS9 family.

The sequence is that of Small ribosomal subunit protein uS9 from Azotobacter vinelandii (strain DJ / ATCC BAA-1303).